A 522-amino-acid chain; its full sequence is Ankyrin repeat and death domain-containing protein 1A (522 aa).

ANK repeat units lie at residues 14-43 (PLERQLHEAARQNNVGRMQELIGRRVNTRA), 47-76 (VGRVALHWAAGAGHEQAVRLLLEHEAAVDE), 90-119 (FGMNALLLSAWFGHLRILQILVNSGAKIHC), 123-152 (DGLTLLHCAAQKGHVPVLAFIMEDLEDVAL), 158-187 (LGRTAFHRAAEHGQLDALDFLVGSGCDHNV), 191-220 (EGNTALHLAAGRGHMAVLQRLVDIGLDLEE), 224-253 (EGLTALHSAAGGSHPDCVQLLLRAGSTVNA), 257-286 (KNLSCLHYAALSGSEDVSRVLIHAGGCANV), 290-319 (QGASPLHLAVRHNFPALVRLLINSDSDVNA), 323-352 (RQQTPLHLAAEHAWQDIADMLLIAGVDLNL), and 356-385 (QGKTALAVAVRSNHVSLVDMIIKADRFYRW). The 89-residue stretch at 413-501 (SVLWRLASRY…DLAGWSTMAR (89 aa)) folds into the Death domain.

The polypeptide is Ankyrin repeat and death domain-containing protein 1A (ANKDD1A) (Homo sapiens (Human)).